A 148-amino-acid polypeptide reads, in one-letter code: Nucleoside diphosphate kinase (148 aa).

Lys-9, Phe-57, Arg-85, Thr-91, Arg-102, and Asn-112 together coordinate ATP. Position 91 is a phosphothreonine (Thr-91). His-115 acts as the Pros-phosphohistidine intermediate in catalysis. Ser-122 is subject to Phosphoserine.

Belongs to the NDK family. In terms of assembly, homotetramer. Mg(2+) serves as cofactor.

The protein resides in the cytoplasm. The catalysed reaction is a 2'-deoxyribonucleoside 5'-diphosphate + ATP = a 2'-deoxyribonucleoside 5'-triphosphate + ADP. It catalyses the reaction a ribonucleoside 5'-diphosphate + ATP = a ribonucleoside 5'-triphosphate + ADP. In terms of biological role, major role in the synthesis of nucleoside triphosphates other than ATP. The ATP gamma phosphate is transferred to the NDP beta phosphate via a ping-pong mechanism, using a phosphorylated active-site intermediate. This is Nucleoside diphosphate kinase from Bacillus licheniformis (strain ATCC 14580 / DSM 13 / JCM 2505 / CCUG 7422 / NBRC 12200 / NCIMB 9375 / NCTC 10341 / NRRL NRS-1264 / Gibson 46).